The chain runs to 110 residues: NADH-quinone oxidoreductase subunit K (110 aa).

3 helical membrane passes run 13–33, 38–58, and 70–90; these read VTHG…GIII, ILIL…NFLI, and VFVF…LAIV.

This sequence belongs to the complex I subunit 4L family. NDH-1 is composed of 14 different subunits. Subunits NuoA, H, J, K, L, M, N constitute the membrane sector of the complex.

Its subcellular location is the cell inner membrane. It catalyses the reaction a quinone + NADH + 5 H(+)(in) = a quinol + NAD(+) + 4 H(+)(out). In terms of biological role, NDH-1 shuttles electrons from NADH, via FMN and iron-sulfur (Fe-S) centers, to quinones in the respiratory chain. The immediate electron acceptor for the enzyme in this species is believed to be ubiquinone. Couples the redox reaction to proton translocation (for every two electrons transferred, four hydrogen ions are translocated across the cytoplasmic membrane), and thus conserves the redox energy in a proton gradient. In Francisella tularensis subsp. tularensis (strain FSC 198), this protein is NADH-quinone oxidoreductase subunit K.